We begin with the raw amino-acid sequence, 375 residues long: E3 ubiquitin-protein ligase IE2 (375 aa).

The segment covering 1–12 has biased composition (polar residues); it reads MSRINNADTPTN. 2 disordered regions span residues 1–61 and 115–142; these read MSRI…VGDR and LTTT…DYNS. An RING-type zinc finger spans residues 177 to 225; sequence CHICSCTFTDIKNYNSNFVTSSECNHAVCFKCYVSIVFNKEAYKCSICN. A coiled-coil region spans residues 272-348; sequence KTIIEELQLE…TFLQNQLDAQ (77 aa).

Belongs to the alphabaculovirus IE2 protein family. As to quaternary structure, homooligomer. Post-translationally, auto-ubiquitinated.

It is found in the host nucleus. The enzyme catalyses S-ubiquitinyl-[E2 ubiquitin-conjugating enzyme]-L-cysteine + [acceptor protein]-L-lysine = [E2 ubiquitin-conjugating enzyme]-L-cysteine + N(6)-ubiquitinyl-[acceptor protein]-L-lysine.. RING-finger E3 ubiquitin ligase that plays an important regulatory role during the initial stages of infection. Migrates to specific nuclear foci early in infection supposely to prepare the sites for viral replication by targeting and ubiquitinating host proteins. This chain is E3 ubiquitin-protein ligase IE2 (IE2), found in Hyphantria cunea nuclear polyhedrosis virus (HcNPV).